A 154-amino-acid chain; its full sequence is Ribosomal RNA large subunit methyltransferase H (154 aa).

Leu-70 and Gly-102 together coordinate S-adenosyl-L-methionine.

It belongs to the RNA methyltransferase RlmH family. As to quaternary structure, homodimer.

The protein resides in the cytoplasm. The catalysed reaction is pseudouridine(1915) in 23S rRNA + S-adenosyl-L-methionine = N(3)-methylpseudouridine(1915) in 23S rRNA + S-adenosyl-L-homocysteine + H(+). Functionally, specifically methylates the pseudouridine at position 1915 (m3Psi1915) in 23S rRNA. In Hyphomonas neptunium (strain ATCC 15444), this protein is Ribosomal RNA large subunit methyltransferase H.